Consider the following 312-residue polypeptide: Speedy protein A (312 aa).

The interval 67–199 is speedy/Ringo box; Required for CDK-binding; that stretch reads RQEMTAFFKL…SHYIWQRERS (133 aa). Position 221 is a phosphoserine (serine 221). Phosphothreonine is present on threonine 223.

The protein belongs to the Speedy/Ringo family. In terms of assembly, interacts with CDK1. Interacts with CDK2. May interact with CDKN1B/KIP1. Identified in a complex with CDK2 and CDKN1B/KIP1, where it interacts primarily with CDK2.

It localises to the nucleus. Functionally, regulates the G1/S phase transition of the cell cycle by binding and activating CDK1 and CDK2. Contributes to CDK2 activation without promoting CDK2 phosphorylation, by inducing a conformation change of the CDK2 T-loop that obstructs the substrate-binding cleft prior to kinase activation. Interferes with CDKN1B-mediated inhibition of CDK2. Mediates cell survival during the DNA damage process through activation of CDK2. The sequence is that of Speedy protein A from Rattus norvegicus (Rat).